Consider the following 453-residue polypeptide: Serine/threonine-protein phosphatase 2A 55 kDa regulatory subunit B delta isoform (453 aa).

WD repeat units lie at residues 32–71 (AEAD…KGRA), 97–138 (EIEE…KRAE), 181–219 (AHTY…RSFN), and 230–270 (ELTE…LCDR). The residue at position 285 (Ser285) is a Phosphoserine. WD repeat units lie at residues 289 to 327 (EIIS…RPVE), 344 to 385 (ENDC…DVTL), and 420 to 452 (DFNK…QDKI). Tyr305 carries the phosphotyrosine modification. Thr308 is modified (phosphothreonine). Residues 385–406 (LEASRENSKPRASLKPRKVCSG) form a disordered region.

It belongs to the phosphatase 2A regulatory subunit B family. PP2A consists of a common heterodimeric core enzyme, composed of a 36 kDa catalytic subunit (subunit C) and a 65 kDa constant regulatory subunit (PR65 or subunit A), that associates with a variety of regulatory subunits. Proteins that associate with the core dimer include three families of regulatory subunits B (the R2/B/PR55/B55, R3/B''/PR72/PR130/PR59 and R5/B'/B56 families), the 48 kDa variable regulatory subunit, viral proteins, and cell signaling molecules. Interacts with ENSA (when phosphorylated at 'Ser-67') and ARPP19 (when phosphorylated at 'Ser-62'), leading to inhibit PP2A activity. Interacts with IER5. Widely expressed with high levels in brain, heart, placenta, skeletal muscle, testis, thymus and spleen.

It localises to the cytoplasm. Functionally, substrate-recognition subunit of protein phosphatase 2A (PP2A) that plays a key role in cell cycle by controlling mitosis entry and exit. Involved in chromosome clustering during late mitosis by mediating dephosphorylation of MKI67. The activity of PP2A complexes containing PPP2R2D (PR55-delta) fluctuate during the cell cycle: the activity is high in interphase and low in mitosis. The protein is Serine/threonine-protein phosphatase 2A 55 kDa regulatory subunit B delta isoform (Ppp2r2d) of Rattus norvegicus (Rat).